The following is a 239-amino-acid chain: Probable 2-phosphosulfolactate phosphatase (239 aa).

The protein belongs to the ComB family. Requires Mg(2+) as cofactor.

The enzyme catalyses (2R)-O-phospho-3-sulfolactate + H2O = (2R)-3-sulfolactate + phosphate. This Clostridium botulinum (strain Okra / Type B1) protein is Probable 2-phosphosulfolactate phosphatase.